We begin with the raw amino-acid sequence, 280 residues long: MLIINDNNLSGLSLQRVNGTGELSVQFKDGRSRISRLYQEGAAKIRMPQAVTGPLEAILINTSGGLTGGDRLKWDVALDDGASAVITTQACERIYRSGGGEARIATRLKAAKGTRLAWLPQETILFNRSILSRRLDVELEEGAQMLVVEATVFGRLAMGERVVAARFADRWRVRLGGRVIHAEEFRLGPDVGAELQAPAVAGGACAMATVLMVCEQAGRHLETARAIIGEEGGCSLWRVGKASKLVVRLYAPDSYALRRRLCPLVALLNGKAGLPKVWTI.

This sequence belongs to the UreD family. UreD, UreF and UreG form a complex that acts as a GTP-hydrolysis-dependent molecular chaperone, activating the urease apoprotein by helping to assemble the nickel containing metallocenter of UreC. The UreE protein probably delivers the nickel.

Its subcellular location is the cytoplasm. Its function is as follows. Required for maturation of urease via the functional incorporation of the urease nickel metallocenter. The polypeptide is Urease accessory protein UreD 1 (Brucella canis (strain ATCC 23365 / NCTC 10854 / RM-666)).